We begin with the raw amino-acid sequence, 411 residues long: Glucose-1-phosphate adenylyltransferase (411 aa).

Residues glycine 164, 179-180 (EK), and serine 197 each bind alpha-D-glucose 1-phosphate.

Belongs to the bacterial/plant glucose-1-phosphate adenylyltransferase family. Homotetramer.

The enzyme catalyses alpha-D-glucose 1-phosphate + ATP + H(+) = ADP-alpha-D-glucose + diphosphate. It participates in glycan biosynthesis; glycogen biosynthesis. Its function is as follows. Involved in the biosynthesis of ADP-glucose, a building block required for the elongation reactions to produce glycogen. Catalyzes the reaction between ATP and alpha-D-glucose 1-phosphate (G1P) to produce pyrophosphate and ADP-Glc. This Corynebacterium kroppenstedtii (strain DSM 44385 / JCM 11950 / CIP 105744 / CCUG 35717) protein is Glucose-1-phosphate adenylyltransferase.